The following is a 473-amino-acid chain: MATQICTPTFSAGSAKGLCGTSGSFSRISSIHSMGSCRAPSLVGTVGSVSSFRTGFSGPGSCLPGSYLSSGCHSSGFAGSGGWFCEGAFNGNEKATMQILNDRLANYLEKVRQLEQENTQLECRIREWYECQIPYICPDYQSYFKTAEELQQKILLTKSENARLILQIDNAKLAADDFRTKYETELSLRQLVEADINGLRRILDELTLCKADLEAQVESLKEELLCLKRNHEEEVNALRSQLGDRLNVEVDAAPPVDLNKILDDMRCQYETLVENNRRDVEAWFNTQTEELNQQVVSSSEQLQCCQTEIIELRRTVNSLEIELQAQQSMRNSLESTLAETEARYSSQLGQMQCLITNVESQLAEIRCDLERQNHEYQVLLDVKARLESEIATYRRLLDGEDCKLPAHPCSTECKPAVRVPYIPSTTCTPAGPCTPAGPCTPAPQVSTQIRTITEEIRDGRVISSREHVVPRAM.

The head stretch occupies residues Met-1–Glu-93. The region spanning Glu-93–Leu-404 is the IF rod domain. Residues Lys-94–Trp-128 form a coil 1A region. The tract at residues Tyr-129–Asp-139 is linker 1. The coil 1B stretch occupies residues Tyr-140–Ser-240. Residues Gln-241–Val-256 form a linker 12 region. The tract at residues Asp-257–Glu-400 is coil 2. Residues Asp-401 to Met-473 are tail.

It belongs to the intermediate filament family. Heterotetramer of two type I and two type II keratins. As to expression, in skin, only expressed in the suprabasal cells of tail scale epidermis. Suprabasally expressed in stratified squamous epithelia and also in the posterior unit of the complex filiform papillae of tongue. Expressed in rare anatomical sites in which an orthokeratinized stratum corneum would be too soft and a hard keratinized structure would be too rigid to meet the functional requirement of the respective epithelia.

The protein is Keratin, type I cuticular Ha6 of Mus musculus (Mouse).